A 205-amino-acid polypeptide reads, in one-letter code: GTP cyclohydrolase-2 (205 aa).

R49 to E53 contributes to the GTP binding site. The Zn(2+) site is built by C54, C65, and C67. GTP is bound by residues Q70, E92 to R94, and T114. D126 acts as the Proton acceptor in catalysis. R128 serves as the catalytic Nucleophile. Residues T149 and K154 each coordinate GTP.

It belongs to the GTP cyclohydrolase II family. Zn(2+) serves as cofactor.

The enzyme catalyses GTP + 4 H2O = 2,5-diamino-6-hydroxy-4-(5-phosphoribosylamino)-pyrimidine + formate + 2 phosphate + 3 H(+). It functions in the pathway cofactor biosynthesis; riboflavin biosynthesis; 5-amino-6-(D-ribitylamino)uracil from GTP: step 1/4. Catalyzes the conversion of GTP to 2,5-diamino-6-ribosylamino-4(3H)-pyrimidinone 5'-phosphate (DARP), formate and pyrophosphate. This Shewanella loihica (strain ATCC BAA-1088 / PV-4) protein is GTP cyclohydrolase-2.